Consider the following 257-residue polypeptide: MIHSKRLKMCLCLIILSVFIGACGMKKEESSKDKQIKENFNKTLSLYPTKNLEDFYDKEGFRDEEFDKGDKGTWIVDSEMVVELKDKKMESRSMVLYINRNTRTTKGNFIVRELWEDSKGYAQSKDTKYPVKMEHNRIIPTKQIADDKLRKEIENFKFFVQYGDFKDINDYKDGDISYNPNVPSYSAEYQLSNNDYNVKQLRKRYNIPTKKAPKLLIKGDGDLKGSSIGHKNLEFTFVENKEENIYFTDSINFKPTE.

Residues 1–22 form the signal peptide; sequence MIHSKRLKMCLCLIILSVFIGA. A lipid anchor (N-palmitoyl cysteine) is attached at cysteine 23. Cysteine 23 carries S-diacylglycerol cysteine lipidation.

This sequence belongs to the staphylococcal tandem lipoprotein family.

It is found in the cell membrane. This is an uncharacterized protein from Staphylococcus aureus (strain MRSA252).